Here is a 102-residue protein sequence, read N- to C-terminus: Large ribosomal subunit protein bL21 (102 aa).

Belongs to the bacterial ribosomal protein bL21 family. Part of the 50S ribosomal subunit. Contacts protein L20.

Its function is as follows. This protein binds to 23S rRNA in the presence of protein L20. The sequence is that of Large ribosomal subunit protein bL21 from Lachnoclostridium phytofermentans (strain ATCC 700394 / DSM 18823 / ISDg) (Clostridium phytofermentans).